The sequence spans 266 residues: F-actin-capping protein subunit beta (266 aa).

The protein belongs to the F-actin-capping protein beta subunit family. In terms of assembly, component of the F-actin capping complex, composed of a heterodimer of an alpha and a beta subunit.

It is found in the cytoplasm. Its subcellular location is the cytoskeleton. The protein localises to the actin patch. In terms of biological role, F-actin-capping proteins bind in a Ca(2+)-independent manner to the fast growing ends of actin filaments (barbed end) thereby blocking the exchange of subunits at these ends. Unlike other capping proteins (such as gelsolin and severin), these proteins do not sever actin filaments. This is F-actin-capping protein subunit beta (cap2) from Aspergillus oryzae (strain ATCC 42149 / RIB 40) (Yellow koji mold).